The following is a 235-amino-acid chain: Phosphoribosylaminoimidazole-succinocarboxamide synthase (235 aa).

It belongs to the SAICAR synthetase family.

It catalyses the reaction 5-amino-1-(5-phospho-D-ribosyl)imidazole-4-carboxylate + L-aspartate + ATP = (2S)-2-[5-amino-1-(5-phospho-beta-D-ribosyl)imidazole-4-carboxamido]succinate + ADP + phosphate + 2 H(+). Its pathway is purine metabolism; IMP biosynthesis via de novo pathway; 5-amino-1-(5-phospho-D-ribosyl)imidazole-4-carboxamide from 5-amino-1-(5-phospho-D-ribosyl)imidazole-4-carboxylate: step 1/2. This chain is Phosphoribosylaminoimidazole-succinocarboxamide synthase, found in Streptococcus pneumoniae serotype 2 (strain D39 / NCTC 7466).